The chain runs to 446 residues: Maturase K (446 aa).

It belongs to the intron maturase 2 family. MatK subfamily.

Its subcellular location is the plastid. The protein resides in the chloroplast. Usually encoded in the trnK tRNA gene intron. Probably assists in splicing its own and other chloroplast group II introns. The sequence is that of Maturase K from Phalaenopsis aphrodite subsp. formosana (Moth orchid).